A 240-amino-acid polypeptide reads, in one-letter code: Arylmalonate decarboxylase (240 aa).

The enzyme catalyses 2-aryl-2-methylmalonate + H(+) = 2-arylpropionate + CO2. The polypeptide is Arylmalonate decarboxylase (Bordetella bronchiseptica (Alcaligenes bronchisepticus)).